A 423-amino-acid chain; its full sequence is Histidine--tRNA ligase (423 aa).

It belongs to the class-II aminoacyl-tRNA synthetase family. As to quaternary structure, homodimer.

It localises to the cytoplasm. It catalyses the reaction tRNA(His) + L-histidine + ATP = L-histidyl-tRNA(His) + AMP + diphosphate + H(+). This Rhodococcus jostii (strain RHA1) protein is Histidine--tRNA ligase.